The chain runs to 126 residues: S-adenosylmethionine decarboxylase proenzyme (126 aa).

The active-site Schiff-base intermediate with substrate; via pyruvic acid is serine 63. Serine 63 is subject to Pyruvic acid (Ser); by autocatalysis. Catalysis depends on histidine 68, which acts as the Proton acceptor; for processing activity. The active-site Proton donor; for catalytic activity is cysteine 83.

Belongs to the prokaryotic AdoMetDC family. Type 1 subfamily. Heterotetramer of two alpha and two beta chains arranged as a dimer of alpha/beta heterodimers. It depends on pyruvate as a cofactor. Is synthesized initially as an inactive proenzyme. Formation of the active enzyme involves a self-maturation process in which the active site pyruvoyl group is generated from an internal serine residue via an autocatalytic post-translational modification. Two non-identical subunits are generated from the proenzyme in this reaction, and the pyruvate is formed at the N-terminus of the alpha chain, which is derived from the carboxyl end of the proenzyme. The post-translation cleavage follows an unusual pathway, termed non-hydrolytic serinolysis, in which the side chain hydroxyl group of the serine supplies its oxygen atom to form the C-terminus of the beta chain, while the remainder of the serine residue undergoes an oxidative deamination to produce ammonia and the pyruvoyl group blocking the N-terminus of the alpha chain.

It carries out the reaction S-adenosyl-L-methionine + H(+) = S-adenosyl 3-(methylsulfanyl)propylamine + CO2. It functions in the pathway amine and polyamine biosynthesis; S-adenosylmethioninamine biosynthesis; S-adenosylmethioninamine from S-adenosyl-L-methionine: step 1/1. In terms of biological role, catalyzes the decarboxylation of S-adenosylmethionine to S-adenosylmethioninamine (dcAdoMet), the propylamine donor required for the synthesis of the polyamines spermine and spermidine from the diamine putrescine. The protein is S-adenosylmethionine decarboxylase proenzyme of Clostridium tetani (strain Massachusetts / E88).